Consider the following 237-residue polypeptide: Leucyl/phenylalanyl-tRNA--protein transferase (237 aa).

The protein belongs to the L/F-transferase family.

The protein localises to the cytoplasm. It carries out the reaction N-terminal L-lysyl-[protein] + L-leucyl-tRNA(Leu) = N-terminal L-leucyl-L-lysyl-[protein] + tRNA(Leu) + H(+). The catalysed reaction is N-terminal L-arginyl-[protein] + L-leucyl-tRNA(Leu) = N-terminal L-leucyl-L-arginyl-[protein] + tRNA(Leu) + H(+). The enzyme catalyses L-phenylalanyl-tRNA(Phe) + an N-terminal L-alpha-aminoacyl-[protein] = an N-terminal L-phenylalanyl-L-alpha-aminoacyl-[protein] + tRNA(Phe). In terms of biological role, functions in the N-end rule pathway of protein degradation where it conjugates Leu, Phe and, less efficiently, Met from aminoacyl-tRNAs to the N-termini of proteins containing an N-terminal arginine or lysine. The polypeptide is Leucyl/phenylalanyl-tRNA--protein transferase (aat) (Vibrio vulnificus (strain CMCP6)).